The sequence spans 208 residues: Ribonuclease HII (208 aa).

Residues 13–202 (DLVAGVDEVG…VRQAYEAREA (190 aa)) form the RNase H type-2 domain. Positions 19, 20, and 111 each coordinate a divalent metal cation.

Belongs to the RNase HII family. The cofactor is Mn(2+). Mg(2+) is required as a cofactor.

It localises to the cytoplasm. The enzyme catalyses Endonucleolytic cleavage to 5'-phosphomonoester.. Its function is as follows. Endonuclease that specifically degrades the RNA of RNA-DNA hybrids. This chain is Ribonuclease HII, found in Pseudomonas fluorescens (strain ATCC BAA-477 / NRRL B-23932 / Pf-5).